Here is a 325-residue protein sequence, read N- to C-terminus: Aminotransferase tasG (325 aa).

A substrate-binding site is contributed by Gly35. Pyridoxal 5'-phosphate contacts are provided by residues 89–90 (TW), Asn143, Tyr174, and 203–205 (SFA). Asn143 contributes to the substrate binding site. Lys206 carries the N6-(pyridoxal phosphate)lysine modification. Arg214 contributes to the pyridoxal 5'-phosphate binding site.

Belongs to the class-I pyridoxal-phosphate-dependent aminotransferase family. In terms of assembly, homodimer. Pyridoxal 5'-phosphate is required as a cofactor.

Its pathway is secondary metabolite biosynthesis. Aminotransferase; part of the gene cluster that mediates the biosynthesis of the tetramic acids Sch210971 and Sch210972, potential anti-HIV fungal natural product that contain a decalin core. The PKS module of tasS together with the enoylreductase tasC catalyze the formation of the polyketide unit which is then conjugated to 4-hydroxyl-4-methyl glutamate (HMG) by the condensation domain of the tasS NRPS module. One unique structural feature of Sch210971 and Sch210972 is the tetramic acid motif proposed to be derived from the non-proteinogenic amino acid HMG, by a Dieckmann-type condensation catalyzed by the reductase domain of tasS. The aldolase tasA catalyzes the aldol condensation of 2 molecules of pyruvic acid to yield the intermediate 4-hydroxyl-4-methyl-2-oxoglutarate (HMOG), which can then be stereoselectively transaminated, may be by tasG, to form HMG. The Diels-Alderase tas3 then uses the Dieckmann product of tasS as substrate and catalyzes the Diels-Alder cycloaddition to form the decalin ring of Sch210971 and Sch210972. The polypeptide is Aminotransferase tasG (Hapsidospora irregularis).